The primary structure comprises 364 residues: F-box protein At1g59680 (364 aa).

In terms of domain architecture, F-box spans 2–49 (TTMSDLSVDLVGEILSRVPLTSLSAVRCTCKSWNTLSKHQIFGKAELA).

In Arabidopsis thaliana (Mouse-ear cress), this protein is F-box protein At1g59680.